A 1463-amino-acid chain; its full sequence is DNA polymerase III PolC-type (1463 aa).

The Exonuclease domain maps to 425 to 581 (YVVFDVETTG…YDAEATGRLL (157 aa)).

It belongs to the DNA polymerase type-C family. PolC subfamily.

Its subcellular location is the cytoplasm. It carries out the reaction DNA(n) + a 2'-deoxyribonucleoside 5'-triphosphate = DNA(n+1) + diphosphate. Required for replicative DNA synthesis. This DNA polymerase also exhibits 3' to 5' exonuclease activity. The sequence is that of DNA polymerase III PolC-type from Streptococcus pneumoniae serotype 4 (strain ATCC BAA-334 / TIGR4).